The primary structure comprises 282 residues: Large ribosomal subunit protein uL2 (282 aa).

Disordered stretches follow at residues 31–55 (KRLTKPVRKSGGRNAHGKVTTRHIG) and 223–282 (LAMN…NTQR). Composition is skewed to basic residues over residues 34–55 (TKPVRKSGGRNAHGKVTTRHIG) and 270–282 (VTRRRPGVRNTQR).

This sequence belongs to the universal ribosomal protein uL2 family. Part of the 50S ribosomal subunit. Forms a bridge to the 30S subunit in the 70S ribosome.

Its function is as follows. One of the primary rRNA binding proteins. Required for association of the 30S and 50S subunits to form the 70S ribosome, for tRNA binding and peptide bond formation. It has been suggested to have peptidyltransferase activity; this is somewhat controversial. Makes several contacts with the 16S rRNA in the 70S ribosome. This is Large ribosomal subunit protein uL2 from Anaeromyxobacter dehalogenans (strain 2CP-C).